The following is a 401-amino-acid chain: MRQAWRWFGPEAGVPLDAVRQAGATDIVSALHEVPIGQEWTSAQIVERKNLIESTPTGRHPLTWSVVESIPVSDDIKRSGKAARHDIGAWIASMEALARNDIKVICYNFMPVVDWCRTDLDYITSTGATAMRFDQDRFAAFDLHILQRKGAEKDYSEEDRIAARAIFEAMDETEIEQLIVNIASALPGSTTEPLTIPAFREKLETYASIDAAHLRRNLVEFLEAVTPVADSLGVKLTLHPDDPPRSLFGLPRIASTEADYAAIFAAVPAQSNGMCFCTGSLGVRADNDLPAIARRFASRIHFSHLRATTREGDGRTFHEAAHLEGDVDMVGILRILLEEDRKRDAGQTIIFRSDHGHRMMDDLEKKVTPGYPVIGRMRGLAELRGIITALDACALEYDPNV.

This sequence belongs to the mannonate dehydratase family. Fe(2+) serves as cofactor. The cofactor is Mn(2+).

The enzyme catalyses D-mannonate = 2-dehydro-3-deoxy-D-gluconate + H2O. Its pathway is carbohydrate metabolism; pentose and glucuronate interconversion. Functionally, catalyzes the dehydration of D-mannonate. The protein is Mannonate dehydratase of Brucella canis (strain ATCC 23365 / NCTC 10854 / RM-666).